The primary structure comprises 531 residues: Fatty acid--[acyl-carrier-protein] ligase MmaC (531 aa).

Residue threonine 169 coordinates Mg(2+). ATP contacts are provided by isoleucine 218, valine 308, and serine 312. Glutamate 313 lines the Mg(2+) pocket. Position 403 (aspartate 403) interacts with ATP.

Belongs to the ATP-dependent AMP-binding enzyme family. Requires Mg(2+) as cofactor.

The catalysed reaction is a (2E)-enoyl fatty acid + holo-[ACP] + ATP = a (2E)-enoyl-[ACP] + AMP + diphosphate. It catalyses the reaction a (2E)-enoyl fatty acid + ATP + H(+) = a (2E)-2-fatty-enoyl-AMP + diphosphate. The enzyme catalyses a (2E)-2-fatty-enoyl-AMP + holo-[ACP] = a (2E)-enoyl-[ACP] + AMP + H(+). It carries out the reaction (2E)-decenoate + holo-[ACP] + ATP = (2E)-decenoyl-[ACP] + AMP + diphosphate. The catalysed reaction is a (3R)-3-isocyanyl-fatty acid + holo-[ACP] + ATP = a (3R)-3-isocyanyl-fatty acyl-[ACP] + AMP + diphosphate. It catalyses the reaction a (3R)-3-isocyanyl-fatty acid + ATP + H(+) = a (3R)-3-isocyanyl-fatty acyl-AMP + diphosphate. The enzyme catalyses a (3R)-3-isocyanyl-fatty acyl-AMP + holo-[ACP] = a (3R)-3-isocyanyl-fatty acyl-[ACP] + AMP + H(+). Its function is as follows. Acyl:acyl-carrier protein ligase involved in the biosynthesis of a unique class of isonitrile lipopeptides (INLPs) that seem to play a role in metal acquisition in M.marinum. Acts twice during the INLP pathway, catalyzing the activation of (2E)-2-decenoate as well as probably the corresponding (3R)-3-isocyanyl-fatty acid as acyl-adenylates (acyl-AMP), and then the acyl transfer to the dedicated acyl-carrier protein MmaB. In Mycobacterium marinum (strain ATCC BAA-535 / M), this protein is Fatty acid--[acyl-carrier-protein] ligase MmaC.